Reading from the N-terminus, the 226-residue chain is RING-H2 finger protein ATL75 (226 aa).

The chain crosses the membrane as a helical span at residues 60 to 80; that stretch reads LMLLSVLICGIICCLGLHYII. An RING-type; atypical zinc finger spans residues 136–178; it reads CVICLSDFVSGEQIRMLPKCHHGFHVRCIDKWLQQHLTCPKCR.

The protein belongs to the RING-type zinc finger family. ATL subfamily.

It localises to the membrane. The enzyme catalyses S-ubiquitinyl-[E2 ubiquitin-conjugating enzyme]-L-cysteine + [acceptor protein]-L-lysine = [E2 ubiquitin-conjugating enzyme]-L-cysteine + N(6)-ubiquitinyl-[acceptor protein]-L-lysine.. It participates in protein modification; protein ubiquitination. The polypeptide is RING-H2 finger protein ATL75 (ATL75) (Arabidopsis thaliana (Mouse-ear cress)).